Here is a 168-residue protein sequence, read N- to C-terminus: NADH-quinone oxidoreductase subunit I (168 aa).

4Fe-4S ferredoxin-type domains lie at Leu-58 to Gln-88 and Val-99 to Asn-128. The [4Fe-4S] cluster site is built by Cys-68, Cys-71, Cys-74, Cys-78, Cys-108, Cys-111, Cys-114, and Cys-118.

This sequence belongs to the complex I 23 kDa subunit family. In terms of assembly, NDH-1 is composed of 14 different subunits. Subunits NuoA, H, J, K, L, M, N constitute the membrane sector of the complex. [4Fe-4S] cluster is required as a cofactor.

It localises to the cell inner membrane. It catalyses the reaction a quinone + NADH + 5 H(+)(in) = a quinol + NAD(+) + 4 H(+)(out). In terms of biological role, NDH-1 shuttles electrons from NADH, via FMN and iron-sulfur (Fe-S) centers, to quinones in the respiratory chain. The immediate electron acceptor for the enzyme in this species is believed to be ubiquinone. Couples the redox reaction to proton translocation (for every two electrons transferred, four hydrogen ions are translocated across the cytoplasmic membrane), and thus conserves the redox energy in a proton gradient. The polypeptide is NADH-quinone oxidoreductase subunit I (Ehrlichia ruminantium (strain Gardel)).